The sequence spans 457 residues: Keratin, type II cytoskeletal 7 (457 aa).

An N-acetylserine modification is found at Ser-2. Residue Ser-2 is modified to Phosphoserine. Positions 2 to 84 are head; the sequence is SIHFSSRSTA…DPTIQQVRQE (83 aa). A glycan (O-linked (GlcNAc) serine) is linked at Ser-7. Arg-15 is subject to Dimethylated arginine; alternate. Arg-15 is subject to Omega-N-methylarginine; alternate. Phosphoserine is present on residues Ser-47 and Ser-65. The interval 84–120 is coil 1A; the sequence is EEREQIKTLNNKFASFIDKVRFLEQQNKMLETKWALL. The region spanning 85 to 397 is the IF rod domain; the sequence is EREQIKTLNN…KLLEGEESRL (313 aa). Phosphothreonine is present on Thr-91. The interval 121–138 is linker 1; it reads QEQKSAKSSQLPRIFEAQ. Lys-124 is covalently cross-linked (Glycyl lysine isopeptide (Lys-Gly) (interchain with G-Cter in SUMO2)). Residues 139-230 form a coil 1B region; that stretch reads IAGLRQQLET…TLHETELAEL (92 aa). Lys-173 is modified (N6-acetyllysine). Ser-211, Ser-246, and Ser-248 each carry phosphoserine. Positions 231 to 254 are linker 12; sequence QSQISDTSVVLSMDNSRSLDLDGI. The segment at 255 to 393 is coil 2; sequence IADVKAQYEE…ATYRKLLEGE (139 aa). Residues Lys-259 and Lys-280 each participate in a glycyl lysine isopeptide (Lys-Gly) (interchain with G-Cter in SUMO2) cross-link. Thr-283 carries the phosphothreonine modification. Glycyl lysine isopeptide (Lys-Gly) (interchain with G-Cter in SUMO2) cross-links involve residues Lys-290 and Lys-325. The tract at residues 394-457 is tail; the sequence is ESRLSGDGMG…TSTTRRGTHN (64 aa).

The protein belongs to the intermediate filament family. Heterotetramer of two type I and two type II keratins. Interacts with eukaryotic translation initiator factor 3 (eIF3) subunit EIF3S10. Interacts with GPER1. Arg-15 is dimethylated, probably to asymmetric dimethylarginine. In terms of tissue distribution, expressed in most simple epithelia tested including liver, lactating mammary gland, lung, kidney, stomach, duodenum, colon, oviduct, uterus, pancreas, epididymis, prostate, preputial gland and mesothelium, and in most stratified epithelia tested including dorsal skin, paw/toe, tail, tongue, cervix, forestomach, and bladder. Also expressed in Henle layer of the inner root sheath of whisker follicle.

Blocks interferon-dependent interphase and stimulates DNA synthesis in cells. This chain is Keratin, type II cytoskeletal 7, found in Mus musculus (Mouse).